Reading from the N-terminus, the 523-residue chain is MKNMSQRSMDVEKKAANADSCSVSTSSINVDDADVALRFLKQNGLDESSTANEDDVVAGEEANFYGSHELSPKVLRKVDLFILPFLCCTYLLMFLDKALLNYAASMGIKDHLKGNEFSNLGTIFSAAYIFMEPVVTYLIQKFPISKILGTFITVWGIVLACHAACKTYASLMVVRTLLGLFESSSAVGCIAISGMYYTKSEQSARIGFWATQAGTGYIVGGLISFGFLHYHGTAFTSWQIMFLVVGLVTVAFGVLTFLYLPDNVTNAWFLNKEEKIQVVEHIRANQTGLETKKFKKQQVKELFLHDKFTWPMLLLTACSQISTGAIGTFSVTITGTFGFDKYETALLQLPIGAITAMIILITTQMLSRWGHITLITTSMYIPAIIGCIVLISLPLSHKIGNLFSLYLLYSGSCVITNIYIWNSCNTSGYTKRVFRNAITMIVYNVSCIIAPQMFRAYSAPRYIPAKIALLVTQCVCVPLQLYIGYICKKENEKRDKEQEGQERKKYQFLDLTDIENRNFRYIY.

The Cytoplasmic portion of the chain corresponds to methionine 1–aspartate 79. The helical transmembrane segment at leucine 80–leucine 100 threads the bilayer. Over asparagine 101–serine 118 the chain is Extracellular. The chain crosses the membrane as a helical span at residues asparagine 119–isoleucine 139. Residues glutamine 140–lysine 141 lie on the Cytoplasmic side of the membrane. A helical membrane pass occupies residues phenylalanine 142 to histidine 162. Residues alanine 163–threonine 176 lie on the Extracellular side of the membrane. A helical transmembrane segment spans residues leucine 177–tyrosine 197. Over threonine 198–glycine 207 the chain is Cytoplasmic. The helical transmembrane segment at phenylalanine 208–leucine 228 threads the bilayer. The Extracellular segment spans residues histidine 229 to glutamine 239. The helical transmembrane segment at isoleucine 240–leucine 260 threads the bilayer. Residues proline 261–methionine 312 lie on the Cytoplasmic side of the membrane. A helical transmembrane segment spans residues leucine 313 to isoleucine 333. Over threonine 334 to alanine 345 the chain is Extracellular. Residues leucine 346 to leucine 366 traverse the membrane as a helical segment. The Cytoplasmic segment spans residues serine 367 to histidine 371. The chain crosses the membrane as a helical span at residues isoleucine 372–serine 392. Over leucine 393–glycine 400 the chain is Extracellular. Residues asparagine 401–tryptophan 421 form a helical membrane-spanning segment. The Cytoplasmic portion of the chain corresponds to asparagine 422 to arginine 432. The helical transmembrane segment at valine 433–glutamine 452 threads the bilayer. At methionine 453–lysine 466 the chain is on the extracellular side. A helical transmembrane segment spans residues isoleucine 467–cysteine 487. Over lysine 488–tyrosine 523 the chain is Cytoplasmic.

Belongs to the major facilitator superfamily. Allantoate permease family.

The protein localises to the endoplasmic reticulum membrane. It localises to the cell membrane. Functionally, transports either thiamine or, rather, a related metabolite involved in the thiamine biosynthesis pathway. The sequence is that of Thiamine pathway transporter THI73 (THI73) from Saccharomyces cerevisiae (strain ATCC 204508 / S288c) (Baker's yeast).